The following is a 338-amino-acid chain: Taste receptor type 2 member 39 (338 aa).

At 1 to 30 the chain is on the extracellular side; that stretch reads MLGRCFPPDTKEKQQLRMTKLCDPAESELS. A helical transmembrane segment spans residues 31-51; that stretch reads PFLITLILAVLLAEYLIGIIA. The Cytoplasmic segment spans residues 52–74; it reads NGFIMAIHAAEWVQNKAVSTSGR. Residues 75-95 traverse the membrane as a helical segment; the sequence is ILVFLSVSRIALQSLMMLEIT. Topologically, residues 96–116 are extracellular; sequence ISSTSLSFYSEDAVYYAFKIS. The chain crosses the membrane as a helical span at residues 117–137; sequence FIFLNFCSLWFAAWLSFFYFV. The Cytoplasmic portion of the chain corresponds to 138-156; it reads KIANFSYPLFLKLRWRITG. The chain crosses the membrane as a helical span at residues 157–177; that stretch reads LIPWLLWLSVFISFSHSMFCI. Topologically, residues 178–205 are extracellular; it reads NIXTVYCNNSFPIHSSNSTKKTYLSEIN. 2 N-linked (GlcNAc...) asparagine glycosylation sites follow: Asn-185 and Asn-194. A helical transmembrane segment spans residues 206 to 226; it reads VVGLAFFFNLGIVTPLIMFIL. At 227–262 the chain is on the cytoplasmic side; sequence TATLLILSLKRHTLHMGSNATGSNDPSMEAHMGAIK. A helical membrane pass occupies residues 263 to 283; the sequence is ATSYFLILYIFNAVALFIYLS. Topologically, residues 284 to 291 are extracellular; that stretch reads NMFDINSL. Residues 292 to 312 form a helical membrane-spanning segment; the sequence is WNNLCQIIMAAYPASHSILLI. At 313–338 the chain is on the cytoplasmic side; the sequence is QDNPGLRRAWKRLQLRLHLYPKEWTL.

This sequence belongs to the G-protein coupled receptor T2R family.

The protein localises to the membrane. Receptor that may play a role in the perception of bitterness and is gustducin-linked. May play a role in sensing the chemical composition of the gastrointestinal content. The activity of this receptor may stimulate alpha gustducin, mediate PLC-beta-2 activation and lead to the gating of TRPM5. The protein is Taste receptor type 2 member 39 (TAS2R39) of Gorilla gorilla gorilla (Western lowland gorilla).